The primary structure comprises 162 residues: uncharacterized protein (162 aa).

This is an uncharacterized protein from Sputnik virophage.